The primary structure comprises 546 residues: Aladin (546 aa).

Cys2 bears the N-acetylcysteine mark. Ser33 is subject to Phosphoserine. WD repeat units follow at residues 142–180, 183–222, 234–274, 280–316, 324–380, 386–433, and 442–482; these read EFAQ…VYNA, TIVP…IWTL, GCAQ…VWDV, VPLP…VWEA, WPTL…IVAD, IQTP…LFRT, and LPCG…IAHI. Phosphoserine occurs at positions 495, 511, 522, and 525. The interval 500 to 546 is disordered; it reads RAQEPPAGGGGSIHDLPLFTETSPTSAPWDPLPGPPPVLPHSPHSHL. Positions 529-539 are enriched in pro residues; it reads DPLPGPPPVLP. Ser541 carries the phosphoserine modification. Positions 544–546 match the Microbody targeting signal motif; it reads SHL.

Interacts with NDC1, the interaction is required for nuclear pore localization. Interacts with the inactive form aurora kinase AURKA. Interacts with PGRMC2. Widely expressed. Particularly abundant in cerebellum, corpus callosum, adrenal gland, pituitary gland, gastrointestinal structures and fetal lung.

It localises to the nucleus. It is found in the nuclear pore complex. The protein resides in the cytoplasm. The protein localises to the cytoskeleton. Its subcellular location is the spindle pole. It localises to the nucleus envelope. In terms of biological role, plays a role in the normal development of the peripheral and central nervous system. Required for the correct localization of aurora kinase AURKA and the microtubule minus end-binding protein NUMA1 as well as a subset of AURKA targets which ensures proper spindle formation and timely chromosome alignment. The chain is Aladin (AAAS) from Homo sapiens (Human).